The following is a 664-amino-acid chain: MSEQKKSSKIIGIDLGTTNSCVSVMEGGQAKVITSSEGTRTTPSIVAFKGNETLVGIPAKRQAVTNPEKTLASTKRFIGRKHSEVESEIKTVPYKVASGSNGDVVFLVDGKQYTPEEIGAQVLIKMKETAEAYLGEPVTEAVITVPAYFNDSQRASTKDAGRIAGLDVKRIIPEPTAAALAYGIDKAGDKKIAVFDLGGGTFDISILEIGDGVFEVLSTNGDTHLGGDDFDEVIIKWMIEEFKKQEGIDLSKDNMALQRLKDAAEKAKIELSGVSSTEINQPFITMDASGPKHLTLTLTRAHFEKLASTLLERTKAPCQKALADAKLSASDIDDVLLVGGMSRMPAVQEVVKSIFGKEPNKGVNPDEVVAIGAAIQGGVLGGEVKDVLLLDVIPLSLGIETLGGVMTPLVERNTTIPTQKKQIFSTAADNQPAVTIVVLQGERPMAKDNKEIGRFDLTDIPPAPRGHPQIEVTFDIDANGILHVSAKDAASGREQKIRIEASSGLKEDEIQRMINDAEKHKEEDKKRREASDARNEADSMIFRAEKAISDYKDNIPESLVKEIEERIEKVRTVLKEEAPVEKIKDASEELSRHMQKIGEAMQSQSASAAASSAANAQGGPNINTEDLKKHSFSTKPPAGNSASSNSNNENIEEADVEIVDKPND.

Position 201 is a phosphothreonine; by autocatalysis (Thr-201). Disordered stretches follow at residues Asp-516–Asp-538 and Ala-578–Asp-664. The span at Ala-578 to Arg-592 shows a compositional bias: basic and acidic residues. Composition is skewed to low complexity over residues Ala-600–Gln-617 and Ala-638–Glu-649.

Belongs to the heat shock protein 70 family.

Its function is as follows. Acts as a chaperone. This Chlamydia caviae (strain ATCC VR-813 / DSM 19441 / 03DC25 / GPIC) (Chlamydophila caviae) protein is Chaperone protein DnaK.